We begin with the raw amino-acid sequence, 171 residues long: CDP-archaeol synthase (171 aa).

Transmembrane regions (helical) follow at residues 7 to 27, 54 to 74, 84 to 104, 115 to 135, and 141 to 161; these read IFWA…PVLV, GFIG…FITP, VKLA…GSFI, PAIG…AYPV, and GQII…NYFA.

The protein belongs to the CDP-archaeol synthase family. It depends on Mg(2+) as a cofactor.

The protein localises to the cell membrane. It catalyses the reaction 2,3-bis-O-(geranylgeranyl)-sn-glycerol 1-phosphate + CTP + H(+) = CDP-2,3-bis-O-(geranylgeranyl)-sn-glycerol + diphosphate. The protein operates within membrane lipid metabolism; glycerophospholipid metabolism. Catalyzes the formation of CDP-2,3-bis-(O-geranylgeranyl)-sn-glycerol (CDP-archaeol) from 2,3-bis-(O-geranylgeranyl)-sn-glycerol 1-phosphate (DGGGP) and CTP. This reaction is the third ether-bond-formation step in the biosynthesis of archaeal membrane lipids. The polypeptide is CDP-archaeol synthase (Thermococcus kodakarensis (strain ATCC BAA-918 / JCM 12380 / KOD1) (Pyrococcus kodakaraensis (strain KOD1))).